Here is a 358-residue protein sequence, read N- to C-terminus: Dynein axonemal assembly factor 10 (358 aa).

WD repeat units lie at residues 64–106 (EKSK…SPVY), 116–155 (NAIDGVGGLGIGDGAPEIVTGSRDGTVKVWDSRQKDTPVV), 163–206 (ETKR…LRWE), 208–250 (NIRN…PSKG), 258–298 (AHKS…QRSK), and 320–358 (LSTQPISSLDWSPDKQGLCVCSSFDQSVRVLIVTKLNTV).

In terms of assembly, interacts with PIH1D1; the interaction associates DNAAF10 with the R2TP complex. Interacts with several dynein axonemal assembly factors.

It is found in the dynein axonemal particle. Functionally, key assembly factor specifically required for the stability of axonemal dynein heavy chains in cytoplasm. The protein is Dynein axonemal assembly factor 10 (dnaaf10) of Danio rerio (Zebrafish).